Reading from the N-terminus, the 3083-residue chain is Genome polyprotein (3083 aa).

In terms of domain architecture, Peptidase S30 spans 173–313; the sequence is IVCVDDVNNL…VLFYSDVEHY (141 aa). Serine 267 functions as the For P1 proteinase activity in the catalytic mechanism. Positions 365 to 368 match the Involved in interaction with stylet and aphid transmission motif; that stretch reads KLSC. The short motif at 621-623 is the Involved in virions binding and aphid transmission element; that stretch reads PTK. The 123-residue stretch at 647 to 769 folds into the Peptidase C6 domain; sequence MYIAKEGYCY…QSEMKHYRVG (123 aa). Active-site for helper component proteinase activity residues include cysteine 655 and histidine 728. One can recognise a Helicase ATP-binding domain in the interval 1239 to 1391; sequence EIASSSEGEF…TQFAVKVKTE (153 aa). 1252-1259 provides a ligand contact to ATP; that stretch reads GAVGSGKS. A DECH box motif is present at residues 1341–1344; that stretch reads DECH. The Helicase C-terminal domain maps to 1410–1569; that stretch reads DMVQHGNNIL…GLSVTTHGVS (160 aa). The Nuclear localization signal signature appears at 1894–1903; it reads KRGKVKGNNS. Position 1918 is an O-(5'-phospho-RNA)-tyrosine (tyrosine 1918). Residues 2045–2263 form the Peptidase C4 domain; it reads SKSIYKGVRD…IAWGSLNLVD (219 aa). Catalysis depends on for nuclear inclusion protein A activity residues histidine 2090, aspartate 2125, and cysteine 2195. The 125-residue stretch at 2529–2653 folds into the RdRp catalytic domain; it reads WLYCHADGSQ…AVKDEDSGLL (125 aa). Residues 2808–2855 are disordered; that stretch reads QTREAGAGASKKDKDEDKDKKKDVASSSASEKAVATATKDKDVNAGSH. Positions 2817–2831 are enriched in basic and acidic residues; sequence SKKDKDEDKDKKKDV. Residues 2832 to 2844 show a composition bias toward low complexity; sequence ASSSASEKAVATA. Phosphothreonine is present on threonine 3065.

Belongs to the potyviridae genome polyprotein family. Interacts with host eIF4E protein (via cap-binding region); this interaction mediates the translation of the VPg-viral RNA conjugates. Part of a complex that comprises VPg, RNA, host EIF4E and EIF4G; this interaction mediates the translation of the VPg-viral RNA conjugates. Post-translationally, VPg is uridylylated by the polymerase and is covalently attached to the 5'-end of the genomic RNA. This uridylylated form acts as a nucleotide-peptide primer for the polymerase. Potyviral RNA is expressed as two polyproteins which undergo post-translational proteolytic processing. Genome polyprotein is processed by NIa-pro, P1 and HC-pro proteinases resulting in the production of at least ten individual proteins. P3N-PIPO polyprotein is cleaved by P1 and HC-pro proteinases resulting in the production of three individual proteins. The P1 proteinase and the HC-pro cleave only their respective C-termini autocatalytically. 6K1 is essential for proper proteolytic separation of P3 from CI.

Its subcellular location is the host cytoplasmic vesicle. It is found in the host nucleus. The protein resides in the virion. The enzyme catalyses RNA(n) + a ribonucleoside 5'-triphosphate = RNA(n+1) + diphosphate. It catalyses the reaction Hydrolyzes glutaminyl bonds, and activity is further restricted by preferences for the amino acids in P6 - P1' that vary with the species of potyvirus, e.g. Glu-Xaa-Xaa-Tyr-Xaa-Gln-|-(Ser or Gly) for the enzyme from tobacco etch virus. The natural substrate is the viral polyprotein, but other proteins and oligopeptides containing the appropriate consensus sequence are also cleaved.. It carries out the reaction Hydrolyzes a Gly-|-Gly bond at its own C-terminus, commonly in the sequence -Tyr-Xaa-Val-Gly-|-Gly, in the processing of the potyviral polyprotein.. Required for aphid transmission and also has proteolytic activity. Only cleaves a Gly-Gly dipeptide at its own C-terminus. Interacts with virions and aphid stylets. Acts as a suppressor of RNA-mediated gene silencing, also known as post-transcriptional gene silencing (PTGS), a mechanism of plant viral defense that limits the accumulation of viral RNAs. May have RNA-binding activity. Functionally, has helicase activity. It may be involved in replication. Its function is as follows. Indispensable for virus replication. Reduces the abundance of host transcripts related to jasmonic acid biosynthesis therefore altering the host defenses. In order to increase its own stability, decreases host protein degradation pathways. In terms of biological role, indispensable for virus replication. Mediates the cap-independent, EIF4E-dependent translation of viral genomic RNAs. Binds to the cap-binding site of host EIF4E and thus interferes with the host EIF4E-dependent mRNA export and translation. VPg-RNA directly binds EIF4E and is a template for transcription. Also forms trimeric complexes with EIF4E-EIF4G, which are templates for translation. Functionally, has RNA-binding and proteolytic activities. Its function is as follows. An RNA-dependent RNA polymerase that plays an essential role in the virus replication. In terms of biological role, involved in aphid transmission, cell-to-cell and systemis movement, encapsidation of the viral RNA and in the regulation of viral RNA amplification. In Zucchini yellow mosaic virus (strain Singapore) (ZYMV), this protein is Genome polyprotein.